A 318-amino-acid polypeptide reads, in one-letter code: NADH-ubiquinone oxidoreductase chain 1 (318 aa).

Helical transmembrane passes span 2-22, 37-57, 69-89, 100-120, 136-156, 171-191, 231-251, 253-273, and 293-313; these read FLMNILCLVIPILLAMAFLTL, PNIVGPYGLLQPIADAIKLFI, LMFTLAPTLAFTLALSLWIPM, LGVLFILALSSLAVYSILWSG, VAQTISYEVTLAIILLSIMMM, HMWLIFPLWPLAMMWFISTLA, IIMMNALTTTLFLGAFHNPLF, ELFTVNFITKTLILTMMFLWV, and FLPLTLALCMFHVSMPALSAG.

The protein belongs to the complex I subunit 1 family. Core subunit of respiratory chain NADH dehydrogenase (Complex I) which is composed of 45 different subunits.

Its subcellular location is the mitochondrion inner membrane. The enzyme catalyses a ubiquinone + NADH + 5 H(+)(in) = a ubiquinol + NAD(+) + 4 H(+)(out). In terms of biological role, core subunit of the mitochondrial membrane respiratory chain NADH dehydrogenase (Complex I) which catalyzes electron transfer from NADH through the respiratory chain, using ubiquinone as an electron acceptor. Essential for the catalytic activity and assembly of complex I. The protein is NADH-ubiquinone oxidoreductase chain 1 (MT-ND1) of Euphractus sexcinctus (Six-banded armadillo).